Consider the following 111-residue polypeptide: Phosphoribosyl-ATP pyrophosphatase (111 aa).

Belongs to the PRA-PH family.

It localises to the cytoplasm. It carries out the reaction 1-(5-phospho-beta-D-ribosyl)-ATP + H2O = 1-(5-phospho-beta-D-ribosyl)-5'-AMP + diphosphate + H(+). Its pathway is amino-acid biosynthesis; L-histidine biosynthesis; L-histidine from 5-phospho-alpha-D-ribose 1-diphosphate: step 2/9. The protein is Phosphoribosyl-ATP pyrophosphatase of Pseudomonas paraeruginosa (strain DSM 24068 / PA7) (Pseudomonas aeruginosa (strain PA7)).